We begin with the raw amino-acid sequence, 585 residues long: Mycosin-5 (585 aa).

The first 39 residues, 1–39 (MQRFGTGSSRSWCGRAGTATIAAVLLASGALTGLPPAYA), serve as a signal peptide directing secretion. The 439-residue stretch at 83–521 (PKYMEMLNLN…YGVVDPVAAL (439 aa)) folds into the Peptidase S8 domain. Residues Asp109 and His141 each act as charge relay system in the active site. A compositionally biased stretch (low complexity) spans 163–173 (VPRRPVTIPTT). The segment at 163 to 269 (VPRRPVTIPT…PALGPPPDAF (107 aa)) is disordered. Composition is skewed to pro residues over residues 196 to 224 (PAPP…PQPP) and 252 to 267 (NPHP…PPPD). The Charge relay system role is filled by Ser466. A helical membrane pass occupies residues 552–572 (VPIWVAAGGLAGALLIGGAVF).

Belongs to the peptidase S8 family.

It localises to the cell membrane. This chain is Mycosin-5, found in Mycobacterium tuberculosis (strain ATCC 25618 / H37Rv).